A 152-amino-acid chain; its full sequence is Holo-[acyl-carrier-protein] synthase (152 aa).

D7 and E60 together coordinate Mg(2+).

Belongs to the P-Pant transferase superfamily. AcpS family. The cofactor is Mg(2+).

It localises to the cytoplasm. The catalysed reaction is apo-[ACP] + CoA = holo-[ACP] + adenosine 3',5'-bisphosphate + H(+). Transfers the 4'-phosphopantetheine moiety from coenzyme A to a Ser of acyl-carrier-protein. The protein is Holo-[acyl-carrier-protein] synthase of Bifidobacterium adolescentis (strain ATCC 15703 / DSM 20083 / NCTC 11814 / E194a).